The primary structure comprises 858 residues: Leucine--tRNA ligase (858 aa).

A 'HIGH' region motif is present at residues 42–52; that stretch reads PYPSGRLHMGH. The 'KMSKS' region motif lies at 618–622; sequence KMSKS. Lys-621 contacts ATP.

This sequence belongs to the class-I aminoacyl-tRNA synthetase family.

It is found in the cytoplasm. The enzyme catalyses tRNA(Leu) + L-leucine + ATP = L-leucyl-tRNA(Leu) + AMP + diphosphate. This is Leucine--tRNA ligase from Vibrio atlanticus (strain LGP32) (Vibrio splendidus (strain Mel32)).